Consider the following 932-residue polypeptide: Envelope glycoprotein B (932 aa).

The span at 1 to 12 (MAARGGAERAAG) shows a compositional bias: low complexity. 2 disordered regions span residues 1–25 (MAAR…RHLR) and 67–105 (GRPA…SPDN). The signal sequence occupies residues 1–62 (MAARGGAERA…LWATWALLLA (62 aa)). The Virion surface portion of the chain corresponds to 63–806 (APAAGRPATT…SGIASFIANP (744 aa)). Residues 71–95 (TTPPAPPPEEAASPAPPASPSPPGP) show a composition bias toward pro residues. 2 N-linked (GlcNAc...) asparagine; by host glycosylation sites follow: asparagine 105 and asparagine 153. 5 disulfides stabilise this stretch: cysteine 128–cysteine 607, cysteine 145–cysteine 563, cysteine 218–cysteine 282, cysteine 375–cysteine 423, and cysteine 628–cysteine 665. 2 involved in fusion and/or binding to host membrane regions span residues 184–190 (TWAGSTY) and 269–276 (GSAGLYRT). Residues asparagine 441 and asparagine 483 are each glycosylated (N-linked (GlcNAc...) asparagine; by host). Residues 492 to 527 (AAAPKPGPRRARRAAPSAPGGPGAANGPAGDGDAGG) are disordered. Over residues 511-526 (GGPGAANGPAGDGDAG) the composition is skewed to gly residues. Residues asparagine 640 and asparagine 706 are each glycosylated (N-linked (GlcNAc...) asparagine; by host). Hydrophobic membrane proximal region regions lie at residues 751–804 (IDRV…SFIA) and 784–804 (VVLG…SFIA). A helical membrane pass occupies residues 807–827 (FGALATGLLVLAGLVAAFLAY). Topologically, residues 828–932 (RYISRLRSNP…QLPMADVGGA (105 aa)) are intravirion. The Golgi targeting motif lies at 880–883 (YMSL). Positions 921–924 (YQQL) match the Internalization motif motif.

This sequence belongs to the herpesviridae glycoprotein B family. As to quaternary structure, homotrimer; disulfide-linked. Binds to heparan sulfate proteoglycans. Interacts with gH/gL heterodimer. Post-translationally, a proteolytic cleavage by host furin generates two subunits that remain linked by disulfide bonds.

The protein localises to the virion membrane. Its subcellular location is the host cell membrane. The protein resides in the host endosome membrane. It localises to the host Golgi apparatus membrane. Functionally, envelope glycoprotein that forms spikes at the surface of virion envelope. Essential for the initial attachment to heparan sulfate moieties of the host cell surface proteoglycans. Involved in fusion of viral and cellular membranes leading to virus entry into the host cell. Following initial binding to its host receptors, membrane fusion is mediated by the fusion machinery composed at least of gB and the heterodimer gH/gL. May be involved in the fusion between the virion envelope and the outer nuclear membrane during virion egress. The protein is Envelope glycoprotein B of Bos taurus (Bovine).